A 326-amino-acid polypeptide reads, in one-letter code: Glycerol-3-phosphate dehydrogenase [NAD(P)+] (326 aa).

NADPH contacts are provided by W15, R35, and K107. The sn-glycerol 3-phosphate site is built by K107, G135, and S137. A139 lines the NADPH pocket. Residues K190, D243, S253, R254, and N255 each contribute to the sn-glycerol 3-phosphate site. The active-site Proton acceptor is the K190. Residue R254 participates in NADPH binding. L273 and E275 together coordinate NADPH.

Belongs to the NAD-dependent glycerol-3-phosphate dehydrogenase family.

The protein localises to the cytoplasm. It catalyses the reaction sn-glycerol 3-phosphate + NAD(+) = dihydroxyacetone phosphate + NADH + H(+). The enzyme catalyses sn-glycerol 3-phosphate + NADP(+) = dihydroxyacetone phosphate + NADPH + H(+). Its pathway is membrane lipid metabolism; glycerophospholipid metabolism. Its function is as follows. Catalyzes the reduction of the glycolytic intermediate dihydroxyacetone phosphate (DHAP) to sn-glycerol 3-phosphate (G3P), the key precursor for phospholipid synthesis. The chain is Glycerol-3-phosphate dehydrogenase [NAD(P)+] from Bradyrhizobium diazoefficiens (strain JCM 10833 / BCRC 13528 / IAM 13628 / NBRC 14792 / USDA 110).